A 177-amino-acid chain; its full sequence is B-phycoerythrin beta chain (177 aa).

Residues Lys-28, Asn-35, Asp-39, Cys-50, Asp-54, Cys-61, Asn-72, 77-78, Cys-82, Arg-129, 147-148, 154-158, and Cys-158 each bind (2R,3E)-phycoerythrobilin; these read RR, SQ, and PQGDC. Residue Asn-72 is modified to N4-methylasparagine.

It belongs to the phycobiliprotein family. As to quaternary structure, heterotetramer of 2 different alpha chains and 2 identical beta chains. The subunit composition could comprise any combination of 2 out of 4 different alpha units with an invariant beta unit. Post-translationally, contains three covalently linked phycoerythrobilin chromophores.

Its subcellular location is the plastid. It localises to the chloroplast thylakoid membrane. Light-harvesting photosynthetic tetrapyrrole chromophore-protein from the phycobiliprotein complex. The sequence is that of B-phycoerythrin beta chain (cpeB) from Rhodomonas sp. (strain CS 24) (Chroomonas sp. (strain CS24)).